A 146-amino-acid chain; its full sequence is Large ribosomal subunit protein uL15 (146 aa).

Positions Met1 to Lys13 are enriched in basic and acidic residues. Residues Met1 to Gln54 are disordered. 2 stretches are compositionally biased toward gly residues: residues Arg21–Ala31 and Ser42–Gly52.

It belongs to the universal ribosomal protein uL15 family. In terms of assembly, part of the 50S ribosomal subunit.

Functionally, binds to the 23S rRNA. This Clostridium novyi (strain NT) protein is Large ribosomal subunit protein uL15.